The chain runs to 99 residues: Sec-independent protein translocase protein TatA (99 aa).

Residues Met-1–Phe-21 form a helical membrane-spanning segment. A disordered region spans residues Ala-46–Ser-99. Over residues Ala-53 to Pro-69 the composition is skewed to low complexity. A compositionally biased stretch (polar residues) spans Val-84–Ser-99.

It belongs to the TatA/E family. In terms of assembly, the Tat system comprises two distinct complexes: a TatABC complex, containing multiple copies of TatA, TatB and TatC subunits, and a separate TatA complex, containing only TatA subunits. Substrates initially bind to the TatABC complex, which probably triggers association of the separate TatA complex to form the active translocon.

The protein localises to the cell membrane. Part of the twin-arginine translocation (Tat) system that transports large folded proteins containing a characteristic twin-arginine motif in their signal peptide across membranes. TatA could form the protein-conducting channel of the Tat system. The polypeptide is Sec-independent protein translocase protein TatA (Streptomyces griseus subsp. griseus (strain JCM 4626 / CBS 651.72 / NBRC 13350 / KCC S-0626 / ISP 5235)).